The sequence spans 170 residues: Transcription factor E (170 aa).

The 93-residue stretch at 1–93 (MKEAYLYIVE…TWYVDDDVIR (93 aa)) folds into the HTH TFE/IIEalpha-type domain.

It belongs to the TFE family. As to quaternary structure, monomer. Interaction with RNA polymerase subunits RpoF and RpoE is necessary for Tfe stimulatory transcription activity. Able to interact with Tbp and RNA polymerase in the absence of DNA promoter. Interacts both with the preinitiation and elongation complexes.

Functionally, transcription factor that plays a role in the activation of archaeal genes transcribed by RNA polymerase. Facilitates transcription initiation by enhancing TATA-box recognition by TATA-box-binding protein (Tbp), and transcription factor B (Tfb) and RNA polymerase recruitment. Not absolutely required for transcription in vitro, but particularly important in cases where Tbp or Tfb function is not optimal. It dynamically alters the nucleic acid-binding properties of RNA polymerases by stabilizing the initiation complex and destabilizing elongation complexes. Seems to translocate with the RNA polymerase following initiation and acts by binding to the non template strand of the transcription bubble in elongation complexes. This Pyrobaculum neutrophilum (strain DSM 2338 / JCM 9278 / NBRC 100436 / V24Sta) (Thermoproteus neutrophilus) protein is Transcription factor E.